Consider the following 193-residue polypeptide: Partner of Y14 and mago (193 aa).

2 disordered regions span residues 1 to 27 (MSTP…DGTW) and 118 to 142 (IQEP…TKRL). Residues 122–137 (TLPSQSVPTESISQSD) are compositionally biased toward polar residues. A coiled-coil region spans residues 139–192 (TKRLKNLRKKLREIEFLEEKIKAGLLKSPDKDQKEKMSKKNEILNEIDILKNSI).

Belongs to the pym family. In terms of assembly, interacts (via N-terminus) with mago and tsu/Y14; the interaction is direct.

It localises to the cytoplasm. The protein localises to the nucleus. Functionally, regulator of the exon junction complex (EJC), a multiprotein complex that associates immediately upstream of the exon-exon junction on mRNAs and serves as a positional landmarks for the intron exon structure of genes and directs post-transcriptional processes in the cytoplasm such as mRNA export, nonsense-mediated mRNA decay (NMD) or translation. This is Partner of Y14 and mago from Bombyx mori (Silk moth).